Here is a 116-residue protein sequence, read N- to C-terminus: uncharacterized protein (116 aa).

Helical transmembrane passes span 24-44 and 70-90; these read VPFAAAGGYPISFLFIKVLTA and VILTHFLVPIFFFLFQYIILS.

The protein resides in the membrane. This is an uncharacterized protein from Saccharomyces cerevisiae (strain ATCC 204508 / S288c) (Baker's yeast).